A 103-amino-acid polypeptide reads, in one-letter code: Small ribosomal subunit protein uS10 (103 aa).

The protein belongs to the universal ribosomal protein uS10 family. As to quaternary structure, part of the 30S ribosomal subunit.

In terms of biological role, involved in the binding of tRNA to the ribosomes. This Paraburkholderia xenovorans (strain LB400) protein is Small ribosomal subunit protein uS10.